Reading from the N-terminus, the 758-residue chain is 5-methyltetrahydropteroyltriglutamate--homocysteine methyltransferase (758 aa).

Residues 17 to 20 and Lys117 contribute to the 5-methyltetrahydropteroyltri-L-glutamate site; that span reads RELK. L-homocysteine is bound by residues 434–436 and Glu487; that span reads IGS. L-methionine is bound by residues 434–436 and Glu487; that span reads IGS. Residues 518-519 and Trp564 each bind 5-methyltetrahydropteroyltri-L-glutamate; that span reads RC. Asp602 is an L-homocysteine binding site. Asp602 serves as a coordination point for L-methionine. Glu608 contributes to the 5-methyltetrahydropteroyltri-L-glutamate binding site. Zn(2+)-binding residues include His644, Cys646, and Glu668. Catalysis depends on His697, which acts as the Proton donor. Cys729 contacts Zn(2+).

It belongs to the vitamin-B12 independent methionine synthase family. Zn(2+) is required as a cofactor.

The enzyme catalyses 5-methyltetrahydropteroyltri-L-glutamate + L-homocysteine = tetrahydropteroyltri-L-glutamate + L-methionine. It functions in the pathway amino-acid biosynthesis; L-methionine biosynthesis via de novo pathway; L-methionine from L-homocysteine (MetE route): step 1/1. In terms of biological role, catalyzes the transfer of a methyl group from 5-methyltetrahydrofolate to homocysteine resulting in methionine formation. The chain is 5-methyltetrahydropteroyltriglutamate--homocysteine methyltransferase from Yersinia pestis bv. Antiqua (strain Antiqua).